Here is a 465-residue protein sequence, read N- to C-terminus: Fumarate hydratase class II (465 aa).

Substrate is bound by residues 100–102 (SGT), 131–134 (HPND), 141–143 (SSN), and T189. Residue H190 is the Proton donor/acceptor of the active site. Residue S320 is part of the active site. Substrate-binding positions include S321 and 326–328 (KVN).

This sequence belongs to the class-II fumarase/aspartase family. Fumarase subfamily. As to quaternary structure, homotetramer.

The protein resides in the cytoplasm. It carries out the reaction (S)-malate = fumarate + H2O. It functions in the pathway carbohydrate metabolism; tricarboxylic acid cycle; (S)-malate from fumarate: step 1/1. Its function is as follows. Involved in the TCA cycle. Catalyzes the stereospecific interconversion of fumarate to L-malate. The polypeptide is Fumarate hydratase class II (Mesorhizobium japonicum (strain LMG 29417 / CECT 9101 / MAFF 303099) (Mesorhizobium loti (strain MAFF 303099))).